A 568-amino-acid polypeptide reads, in one-letter code: Urease subunit alpha (568 aa).

A Urease domain is found at 131-568 (GGMDAHIHFI…LPLAQRYFLY (438 aa)). Ni(2+)-binding residues include histidine 136, histidine 138, and lysine 219. N6-carboxylysine is present on lysine 219. Residue histidine 221 coordinates substrate. Ni(2+) contacts are provided by histidine 248 and histidine 274. Histidine 322 serves as the catalytic Proton donor. Aspartate 362 serves as a coordination point for Ni(2+).

The protein belongs to the metallo-dependent hydrolases superfamily. Urease alpha subunit family. In terms of assembly, heterotrimer of UreA (gamma), UreB (beta) and UreC (alpha) subunits. Three heterotrimers associate to form the active enzyme. Ni cation is required as a cofactor. Post-translationally, carboxylation allows a single lysine to coordinate two nickel ions.

The protein resides in the cytoplasm. The catalysed reaction is urea + 2 H2O + H(+) = hydrogencarbonate + 2 NH4(+). It participates in nitrogen metabolism; urea degradation; CO(2) and NH(3) from urea (urease route): step 1/1. This chain is Urease subunit alpha, found in Cereibacter sphaeroides (strain ATCC 17025 / ATH 2.4.3) (Rhodobacter sphaeroides).